The sequence spans 140 residues: MPTINQLVRKGRTDKVWKSKSPALNKGFNSLKKKSTDISAPQKRGVCTRVGTMTPKKPNSALRKYARVRLTNGIEVTAYIPGIGHNLQEHSVVLIRGGRVKDLPGVRYHIVRGALDTAGVDKRMQGRSKYGTKKPKAAKK.

Aspartate 102 bears the 3-methylthioaspartic acid mark.

It belongs to the universal ribosomal protein uS12 family. As to quaternary structure, part of the 30S ribosomal subunit. Contacts proteins S8 and S17. May interact with IF1 in the 30S initiation complex.

Functionally, with S4 and S5 plays an important role in translational accuracy. Its function is as follows. Interacts with and stabilizes bases of the 16S rRNA that are involved in tRNA selection in the A site and with the mRNA backbone. Located at the interface of the 30S and 50S subunits, it traverses the body of the 30S subunit contacting proteins on the other side and probably holding the rRNA structure together. The combined cluster of proteins S8, S12 and S17 appears to hold together the shoulder and platform of the 30S subunit. The protein is Small ribosomal subunit protein uS12 of Bacillus cytotoxicus (strain DSM 22905 / CIP 110041 / 391-98 / NVH 391-98).